A 195-amino-acid chain; its full sequence is MSRRNPCKFEIRGHCLNGRRCHYSHNYFEWPPHALLVRQNFMLNKILKSMDKSIDTLSEISGAAELDRTEEYALGIVGVLESYIGSINNITKQSACVAMSKLLIEINSDDIKKLRDNEEPNSPKIRVYNTVISYIESNRKNNKQTIHLLKRLPADVLKKTIKNTLDIHKSIIISNPKESTVNDQNDQTKNNDITG.

The segment at 1-28 (MSRRNPCKFEIRGHCLNGRRCHYSHNYF) adopts a C3H1-type zinc-finger fold. Residues 32 to 49 (PHALLVRQNFMLNKILKS) are oligomerization. A phosphoserine; by host mark is found at Ser-58 and Ser-61. The segment at 76 to 171 (IVGVLESYIG…KNTLDIHKSI (96 aa)) is globular core. The binding to the phosphoprotein stretch occupies residues 126 to 163 (RVYNTVISYIESNRKNNKQTIHLLKRLPADVLKKTIKN). The interval 172 to 194 (IISNPKESTVNDQNDQTKNNDIT) is disordered.

The protein belongs to the pneumoviridae M2-1 protein family. In terms of assembly, homotetramer. The homotetramer interacts with RNA. Interacts with the phosphoprotein (P); this interaction is required for protein M2-1 function, localization in host inclusion bodies. Formation of a complex host PP1/M2-1/P allows P to target host PP1 phosphatase to the M2-1 substrate. Interacts with the nucleoprotein (N). Interacts with the matrix protein (M); this interaction directs M localization to cytoplasmic inclusions comprising viral proteins L, N, P, and M2-1 and mediates M association with the nucleocapsid. Interacts with host RELA. Interacts with host PABPC1 (via C-terminus). Phosphorylated by host in infected cells. Only dephosphorylated M2-1 is competent for viral mRNA binding. Cyclic turnover of phosphorylation-dephosphorylation of M2-1 is required for efficient viral transcription.

The protein resides in the virion. It localises to the host cytoplasm. Its subcellular location is the host nucleus. In terms of biological role, acts as a tetrameric transcription processivity factor that binds in a competitive manner to RNA and the phosphoprotein (P) to prevent premature termination during transcription. Transcription anti-terminator that enhances readthrough of intergenic junctions during viral transcription. Preferentially binds to poly(A)-rich sequences. Plays a role in the association of the matrix protein with the nucleocapsid, which initiates assembly and budding. Also, can activate host NF-kappa-B through association with host RELA. This Human respiratory syncytial virus B (strain B1) protein is Protein M2-1 (M2-1).